The primary structure comprises 273 residues: Large ribosomal subunit protein uL2c (273 aa).

The segment covering 1-31 (MAIHLSKTSSPSTRNGAVNSQVKSNSRNRLI) has biased composition (polar residues). Disordered regions lie at residues 1 to 53 (MAIH…GHRG) and 222 to 273 (MNPV…RRSK).

It belongs to the universal ribosomal protein uL2 family. Part of the 50S ribosomal subunit.

It is found in the plastid. It localises to the chloroplast. The protein is Large ribosomal subunit protein uL2c (rpl2) of Pisum sativum (Garden pea).